A 461-amino-acid chain; its full sequence is L-seryl-tRNA(Sec) selenium transferase (461 aa).

At lysine 294 the chain carries N6-(pyridoxal phosphate)lysine.

It belongs to the SelA family. Requires pyridoxal 5'-phosphate as cofactor.

The protein resides in the cytoplasm. The catalysed reaction is L-seryl-tRNA(Sec) + selenophosphate + H(+) = L-selenocysteinyl-tRNA(Sec) + phosphate. It functions in the pathway aminoacyl-tRNA biosynthesis; selenocysteinyl-tRNA(Sec) biosynthesis; selenocysteinyl-tRNA(Sec) from L-seryl-tRNA(Sec) (bacterial route): step 1/1. Functionally, converts seryl-tRNA(Sec) to selenocysteinyl-tRNA(Sec) required for selenoprotein biosynthesis. This Actinobacillus pleuropneumoniae serotype 5b (strain L20) protein is L-seryl-tRNA(Sec) selenium transferase.